The primary structure comprises 159 residues: Sulfur carrier protein DsrE2 (159 aa).

2 helical membrane-spanning segments follow: residues 21-43 (PFILASTAAALGYEVQVFFTFYG) and 72-91 (WFPVLGLALPGMQGMMTAMM).

The protein localises to the cell membrane. It functions in the pathway energy metabolism; sulfur metabolism. Its function is as follows. Sulfur carrier protein probably involved in sulfur trafficking for oxidative dissimilatory sulfur metabolism. May be a component of a cytoplasmic sulfur relay system delivering sulfur to DsrC. Binds sulfur in the presence of sulfide in vitro. The sequence is that of Sulfur carrier protein DsrE2 from Allochromatium vinosum (strain ATCC 17899 / DSM 180 / NBRC 103801 / NCIMB 10441 / D) (Chromatium vinosum).